We begin with the raw amino-acid sequence, 404 residues long: Argininosuccinate synthase (404 aa).

ATP-binding positions include 12 to 20 (AYSGGLDTS) and Ala-39. 2 residues coordinate L-citrulline: Tyr-91 and Ser-96. Position 121 (Gly-121) interacts with ATP. L-aspartate contacts are provided by Thr-123, Asn-127, and Asp-128. An L-citrulline-binding site is contributed by Asn-127. Positions 131, 180, 189, 265, and 277 each coordinate L-citrulline.

It belongs to the argininosuccinate synthase family. Type 1 subfamily. As to quaternary structure, homotetramer.

Its subcellular location is the cytoplasm. The enzyme catalyses L-citrulline + L-aspartate + ATP = 2-(N(omega)-L-arginino)succinate + AMP + diphosphate + H(+). It functions in the pathway amino-acid biosynthesis; L-arginine biosynthesis; L-arginine from L-ornithine and carbamoyl phosphate: step 2/3. This chain is Argininosuccinate synthase, found in Vibrio parahaemolyticus serotype O3:K6 (strain RIMD 2210633).